The sequence spans 529 residues: Beta-hexosaminidase subunit alpha (529 aa).

The first 22 residues, 1–22, serve as a signal peptide directing secretion; that stretch reads MAGSTLRFSLLLAAAFAGRATA. A propeptide spanning residues 23 to 88 is cleaved from the precursor; that stretch reads LWPWPQYIQT…RFPHPIEKRH (66 aa). A disulfide bridge links cysteine 58 with cysteine 104. N-linked (GlcNAc...) asparagine glycosylation is found at asparagine 115, asparagine 157, and asparagine 295. An intrachain disulfide couples cysteine 277 to cysteine 328. Glutamate 323 functions as the Proton donor in the catalytic mechanism. Residues 423-424 form a critical for hydrolysis GM2 gangliosides region; the sequence is NH. Cysteine 505 and cysteine 522 are oxidised to a cystine.

Belongs to the glycosyl hydrolase 20 family. In terms of assembly, there are 3 beta-hexosaminidase isozymes: isozyme A (hexosaminidase A) is a heterodimer composed of one subunit alpha and one subunit beta (chain A and B); isozyme B (hexosaminidase B) is a homodimer of two beta subunits (two chains A and B); isozyme S (hexosaminidase S) is a homodimer of two alpha subunits. The composition of the dimer (isozyme A versus isozyme S) has a significant effect on the substrate specificity of the alpha subunit active site.

It localises to the lysosome. It catalyses the reaction Hydrolysis of terminal non-reducing N-acetyl-D-hexosamine residues in N-acetyl-beta-D-hexosaminides.. It carries out the reaction N-acetyl-beta-D-galactosaminyl-(1-&gt;4)-beta-D-3-sulfogalactosyl-(1-&gt;4)-beta-D-glucosyl-(1&lt;-&gt;1')-ceramide + H2O = a beta-D-3-sulfogalactosyl-(1-&gt;4)-beta-D-glucosyl-(1&lt;-&gt;1')-ceramide + N-acetyl-beta-D-galactosamine. The catalysed reaction is a ganglioside GM2 (d18:1(4E)) + H2O = a ganglioside GM3 (d18:1(4E)) + N-acetyl-beta-D-galactosamine. The enzyme catalyses a ganglioside GM2 + H2O = a ganglioside GM3 + N-acetyl-beta-D-galactosamine. It catalyses the reaction beta-D-GalNAc-(1-&gt;4)-alpha-L-IdoA-(1-&gt;3)-beta-D-GalNAc-4-sulfate-(1-&gt;4)-alpha-L-IdoA-(1-&gt;3)-D-GalNAc-4-sulfate + H2O = alpha-L-IdoA-(1-&gt;3)-beta-D-GalNAc-4-sulfate-(1-&gt;4)-alpha-L-IdoA-(1-&gt;3)-D-GalNAc-4-sulfate + N-acetyl-D-galactosamine. It carries out the reaction N-acetyl-beta-D-6-sulfogalactosaminyl-(1-&gt;4)-alpha-L-iduronyl-(1-&gt;3)-N-acetyl-D-6-sulfogalactosamine + H2O = alpha-L-iduronyl-(1-&gt;3)-N-acetyl-D-6-sulfogalactosamine + N-acetyl-D-6-sulfogalactosamine. Addition of GM2A stimulates the hydrolysis of sulfated glycosphingolipid SM2 and the ganglioside GM2. Hydrolyzes the non-reducing end N-acetyl-D-hexosamine and/or sulfated N-acetyl-D-hexosamine of glycoconjugates, such as the oligosaccharide moieties from proteins and neutral glycolipids, or from certain mucopolysaccharides. The isozyme S is as active as the isozyme A on the anionic bis-sulfated glycans, the chondroitin-6-sulfate trisaccharide (C6S-3), and the dermatan sulfate pentasaccharide, and the sulfated glycosphingolipid SM2. The isozyme B does not hydrolyze each of these substrates, however hydrolyzes efficiently neutral oligosaccharide. Only the isozyme A is responsible for the degradation of GM2 gangliosides in the presence of GM2A. This chain is Beta-hexosaminidase subunit alpha, found in Bos taurus (Bovine).